Here is a 121-residue protein sequence, read N- to C-terminus: Insertion element IS406 uncharacterized 13.3 kDa protein (121 aa).

In Burkholderia multivorans (strain ATCC 17616 / 249), this protein is Insertion element IS406 uncharacterized 13.3 kDa protein.